The primary structure comprises 63 residues: Large ribosomal subunit protein uL29 (63 aa).

The protein belongs to the universal ribosomal protein uL29 family.

This is Large ribosomal subunit protein uL29 from Bordetella avium (strain 197N).